Reading from the N-terminus, the 199-residue chain is RNA pyrophosphohydrolase (199 aa).

The Nudix hydrolase domain maps to 6-154 (GYRPNVGIVL…KREVYELALS (149 aa)). The Nudix box motif lies at 38 to 59 (GGIQHGESPEQAMYRELHEEVG).

It belongs to the Nudix hydrolase family. RppH subfamily. The cofactor is a divalent metal cation.

Its function is as follows. Accelerates the degradation of transcripts by removing pyrophosphate from the 5'-end of triphosphorylated RNA, leading to a more labile monophosphorylated state that can stimulate subsequent ribonuclease cleavage. The sequence is that of RNA pyrophosphohydrolase from Polynucleobacter asymbioticus (strain DSM 18221 / CIP 109841 / QLW-P1DMWA-1) (Polynucleobacter necessarius subsp. asymbioticus).